A 185-amino-acid polypeptide reads, in one-letter code: MAKDKDQNSIFAITKNLTITCFISGIIIAAVYYITSPVAAQKQVQIQNDTMRVLVNDADKFNKVNGKKDWYAAQKGNKTIAYVVPAESKGYGGAIELLVAVTPDGKVIDFSIVSHNETPGLGANASKDSFRGQFKDKKADALTVVKDKSNTKNIQAMTGATITSKAVTKGVKEAVEQVTTFTGGK.

A helical membrane pass occupies residues 14 to 34 (TKNLTITCFISGIIIAAVYYI). At threonine 161 the chain carries FMN phosphoryl threonine.

The protein belongs to the RnfG family. In terms of assembly, the complex is composed of six subunits: RnfA, RnfB, RnfC, RnfD, RnfE and RnfG. Requires FMN as cofactor.

It is found in the cell membrane. Its function is as follows. Part of a membrane-bound complex that couples electron transfer with translocation of ions across the membrane. Couples electron transfer from reduced ferredoxin to NAD(+) with translocation of H(+) out of the cell. Essential for energy conservation during autotrophic growth. Contributes to ATP synthesis during heterotrophic growth. In Clostridium ljungdahlii (strain ATCC 55383 / DSM 13528 / PETC), this protein is Proton-translocating ferredoxin:NAD(+) oxidoreductase complex subunit G.